We begin with the raw amino-acid sequence, 218 residues long: Hypoxanthine-guanine phosphoribosyltransferase (218 aa).

Alanine 2 carries the post-translational modification N-acetylalanine. Lysine 69 contributes to the GMP binding site. Lysine 103 bears the N6-acetyllysine mark. Residue lysine 115 forms a Glycyl lysine isopeptide (Lys-Gly) (interchain with G-Cter in SUMO1); alternate linkage. Lysine 115 is covalently cross-linked (Glycyl lysine isopeptide (Lys-Gly) (interchain with G-Cter in SUMO2); alternate). GMP is bound by residues glutamate 134–threonine 142, lysine 166, lysine 186–valine 188, and aspartate 194. Aspartate 138 serves as the catalytic Proton acceptor. Residue threonine 142 is modified to Phosphothreonine. Aspartate 194 contributes to the Mg(2+) binding site.

The protein belongs to the purine/pyrimidine phosphoribosyltransferase family. Homotetramer. Mg(2+) is required as a cofactor.

The protein resides in the cytoplasm. The catalysed reaction is IMP + diphosphate = hypoxanthine + 5-phospho-alpha-D-ribose 1-diphosphate. The enzyme catalyses GMP + diphosphate = guanine + 5-phospho-alpha-D-ribose 1-diphosphate. It functions in the pathway purine metabolism; IMP biosynthesis via salvage pathway; IMP from hypoxanthine: step 1/1. Functionally, converts guanine to guanosine monophosphate, and hypoxanthine to inosine monophosphate. Transfers the 5-phosphoribosyl group from 5-phosphoribosylpyrophosphate onto the purine. Plays a central role in the generation of purine nucleotides through the purine salvage pathway. The sequence is that of Hypoxanthine-guanine phosphoribosyltransferase (HPRT1) from Sus scrofa (Pig).